The sequence spans 125 residues: Scinderin (125 aa).

Y13 carries the phosphotyrosine modification. Residues 23–30 (KGGLKYKA) and 49–57 (RLLHVKGRR) contribute to the a 1,2-diacyl-sn-glycero-3-phospho-(1D-myo-inositol-4,5-bisphosphate) site. Residues 59-99 (VRATEVPLSWDSFNKGDCFIIDLGSEIYQWFGSSCNKYERL) form a Gelsolin-like 1 repeat.

The protein belongs to the villin/gelsolin family.

Its subcellular location is the cytoplasm. The protein resides in the cytoskeleton. It is found in the cell projection. It localises to the podosome. Its function is as follows. Ca(2+)-dependent actin filament-severing protein that has a regulatory function in exocytosis by affecting the organization of the microfilament network underneath the plasma membrane. In vitro, also has barbed end capping and nucleating activities in the presence of Ca(2+). Severing activity is inhibited by phosphatidylinositol 4,5-bis-phosphate (PIP2). Required for megakaryocyte differentiation, maturation, polyploidization and apoptosis with the release of platelet-like particles. Plays a role in osteoclastogenesis (OCG) and actin cytoskeletal organization in osteoclasts. Regulates chondrocyte proliferation and differentiation. Inhibits cell proliferation and tumorigenesis. Signaling is mediated by MAPK, p38 and JNK pathways. This Sus scrofa (Pig) protein is Scinderin (SCIN).